Consider the following 207-residue polypeptide: NADH-quinone oxidoreductase subunit C (207 aa).

It belongs to the complex I 30 kDa subunit family. In terms of assembly, NDH-1 is composed of 14 different subunits. Subunits NuoB, C, D, E, F, and G constitute the peripheral sector of the complex.

The protein localises to the cell inner membrane. The catalysed reaction is a quinone + NADH + 5 H(+)(in) = a quinol + NAD(+) + 4 H(+)(out). In terms of biological role, NDH-1 shuttles electrons from NADH, via FMN and iron-sulfur (Fe-S) centers, to quinones in the respiratory chain. The immediate electron acceptor for the enzyme in this species is believed to be ubiquinone. Couples the redox reaction to proton translocation (for every two electrons transferred, four hydrogen ions are translocated across the cytoplasmic membrane), and thus conserves the redox energy in a proton gradient. This Jannaschia sp. (strain CCS1) protein is NADH-quinone oxidoreductase subunit C.